The sequence spans 240 residues: Putative glycyl-radical enzyme activating enzyme MJ1227 (240 aa).

The region spanning 14–232 is the Radical SAM core domain; sequence IDYPKKASAV…KKYIDNVVIR (219 aa). The [4Fe-4S] cluster site is built by cysteine 29, cysteine 33, and cysteine 36. Residues 35–37, glycine 71, and 126–128 contribute to the S-adenosyl-L-methionine site; these read YCH and FDK.

The protein belongs to the organic radical-activating enzymes family. The cofactor is [4Fe-4S] cluster.

The catalysed reaction is glycyl-[protein] + reduced [flavodoxin] + S-adenosyl-L-methionine = glycin-2-yl radical-[protein] + semiquinone [flavodoxin] + 5'-deoxyadenosine + L-methionine + H(+). This Methanocaldococcus jannaschii (strain ATCC 43067 / DSM 2661 / JAL-1 / JCM 10045 / NBRC 100440) (Methanococcus jannaschii) protein is Putative glycyl-radical enzyme activating enzyme MJ1227.